Consider the following 669-residue polypeptide: DNA ligase (669 aa).

NAD(+) contacts are provided by residues 35–39 (DSVYD), 84–85 (SL), and E116. The N6-AMP-lysine intermediate role is filled by K118. NAD(+) contacts are provided by R139, E176, K291, and K315. The Zn(2+) site is built by C409, C412, C427, and C432. The region spanning 591-669 (TTKATLAGKT…EAQLLELIKA (79 aa)) is the BRCT domain.

This sequence belongs to the NAD-dependent DNA ligase family. LigA subfamily. Requires Mg(2+) as cofactor. Mn(2+) is required as a cofactor.

It catalyses the reaction NAD(+) + (deoxyribonucleotide)n-3'-hydroxyl + 5'-phospho-(deoxyribonucleotide)m = (deoxyribonucleotide)n+m + AMP + beta-nicotinamide D-nucleotide.. In terms of biological role, DNA ligase that catalyzes the formation of phosphodiester linkages between 5'-phosphoryl and 3'-hydroxyl groups in double-stranded DNA using NAD as a coenzyme and as the energy source for the reaction. It is essential for DNA replication and repair of damaged DNA. The sequence is that of DNA ligase from Microcystis aeruginosa (strain NIES-843 / IAM M-2473).